Consider the following 153-residue polypeptide: Movement protein (153 aa).

The disordered stretch occupies residues Ser107–Arg153.

It belongs to the luteoviruses movement protein family.

Transports viral genome to neighboring plant cells directly through plasmosdesmata, without any budding. The movement protein allows efficient cell to cell propagation, by bypassing the host cell wall barrier. The protein is Movement protein of Avena byzantina (Oat).